Here is a 50-residue protein sequence, read N- to C-terminus: MDGEGHDINIWGARMSPSPAAAPVSATRGAPWSGCEGCPSRAADRRCVCH.

The tract at residues 1–32 (MDGEGHDINIWGARMSPSPAAAPVSATRGAPW) is disordered. Over residues 16–26 (SPSPAAAPVSA) the composition is skewed to low complexity. Position 47 is a cysteine methyl ester (C47). C47 is lipidated: S-farnesyl cysteine. The propeptide at 48–50 (VCH) is removed in mature form.

It localises to the cell membrane. In terms of biological role, activates B-regulated development. This is Mating-type pheromone BAP1(1) (BAP1(1)) from Schizophyllum commune (Split gill fungus).